We begin with the raw amino-acid sequence, 495 residues long: MNKNLHPLMLAGTGSDVGKSIIAAAFCRIFLQDGYHPAPFKAQNMALNSYATPEGLEIGRAQAVQAEAAGVPCHTDMNPLLLKPSSDHTSQVVLNGRPIGNRNAYEYFRREGREELRKEVHAAFDRLAARYNPVVMEGAGSISEINLRDSDLVNLPMAMHAGADVILVADIDRGGVFASVYGSVMLLRPEERKHIKGILINKFRGDIRLFESGVKMLEDLCGVPVVGVVPYYKDIYIEEEDSVMLQTKNIRAGQGKVNVAVVLLRHLSNFTDFNVLERDPRVHLFYTNNTDELMKADIILLPGSKSTLSDLYELRRNGVAQAIVRAHREGATVMGICGGYQLMGREVCDPDHVEGEIERLPGLGLLPVSTRMQGEKVTRQVRFRFLEDSAVCEGYEIHMGTTTPLADVPVSPLNHLADGREDGYFVDRTCMGTYVHGILDNPSVIDYLLEPFADKLKETAFDYKAFKEEQYDKLAAHVRKHVDLPLIYQILTDND.

A GATase cobBQ-type domain is found at 256–444 (KVNVAVVLLR…VHGILDNPSV (189 aa)). Cys-337 (nucleophile) is an active-site residue. His-436 is an active-site residue.

It belongs to the CobB/CobQ family. CobQ subfamily.

Its pathway is cofactor biosynthesis; adenosylcobalamin biosynthesis. Its function is as follows. Catalyzes amidations at positions B, D, E, and G on adenosylcobyrinic A,C-diamide. NH(2) groups are provided by glutamine, and one molecule of ATP is hydrogenolyzed for each amidation. This chain is Cobyric acid synthase, found in Bacteroides fragilis (strain ATCC 25285 / DSM 2151 / CCUG 4856 / JCM 11019 / LMG 10263 / NCTC 9343 / Onslow / VPI 2553 / EN-2).